The following is a 287-amino-acid chain: Large ribosomal subunit protein uL2 (287 aa).

The tract at residues 221-287 (RGSVMNPCDH…SKRSRGGRDS (67 aa)) is disordered. The segment covering 271 to 287 (LRKRRKTSKRSRGGRDS) has biased composition (basic residues).

The protein belongs to the universal ribosomal protein uL2 family. As to quaternary structure, part of the 50S ribosomal subunit. Forms a bridge to the 30S subunit in the 70S ribosome.

One of the primary rRNA binding proteins. Required for association of the 30S and 50S subunits to form the 70S ribosome, for tRNA binding and peptide bond formation. It has been suggested to have peptidyltransferase activity; this is somewhat controversial. Makes several contacts with the 16S rRNA in the 70S ribosome. The polypeptide is Large ribosomal subunit protein uL2 (Synechococcus sp. (strain CC9902)).